Here is a 1031-residue protein sequence, read N- to C-terminus: GTPase activating protein Gyp51 (1031 aa).

The span at 1–32 shows a compositional bias: basic and acidic residues; it reads MAFTEANEREVQSSYEKENVKIIREEEAKDQE. Disordered regions lie at residues 1–229, 278–317, 339–371, 420–459, and 490–520; these read MAFT…TNVN, FIEQ…SQND, DHLP…DHKA, NDEL…PSHV, and KKNT…STSP. Positions 43–59 are enriched in polar residues; the sequence is TGTSPDLNFFSTQNVMQ. Residues 62-78 are compositionally biased toward acidic residues; the sequence is FEDEYSEFSNEDDEAEI. A compositionally biased stretch (polar residues) spans 105–117; it reads SQQSVEEQNNTTN. The segment covering 195–217 has biased composition (basic and acidic residues); the sequence is EDLKDEVKSVHEFNEPNDLRQQE. Over residues 219–229 the composition is skewed to acidic residues; that stretch reads SYSDDDDTNVN. A compositionally biased stretch (polar residues) spans 278–306; sequence FIEQNGPNSDTVSGFKETSSIVNSSSTTE. Composition is skewed to polar residues over residues 420-429, 436-455, and 493-505; these read NDELSASGSQ, GTNS…NSEP, and TAFS…STNH. A Rab-GAP TBC domain is found at 610 to 806; sequence HNSHTVHTVV…HLYDILFLYG (197 aa). Residues 798 to 818 traverse the membrane as a helical segment; sequence LYDILFLYGPGILFNFGLALL.

This sequence belongs to the GYP5 family.

It localises to the membrane. The protein resides in the cytoplasm. Its function is as follows. GTPase-activating protein involved in ER to Golgi trafficking and polarized exocytosis. The polypeptide is GTPase activating protein Gyp51 (gyp51) (Schizosaccharomyces pombe (strain 972 / ATCC 24843) (Fission yeast)).